A 370-amino-acid polypeptide reads, in one-letter code: Homospermidine synthase 1 (370 aa).

This sequence belongs to the deoxyhypusine synthase family. In terms of assembly, homotetramer. The cofactor is NAD(+). Post-translationally, the N-terminus is blocked. In terms of tissue distribution, expressed in roots.

The enzyme catalyses putrescine + spermidine = sym-homospermidine + propane-1,3-diamine. It participates in alkaloid biosynthesis; pyrrolizidine alkaloid biosynthesis. Functionally, catalyzes the transfer of an aminobutyl unit from spermidine onto putrescine. The resulting polyamine homospermidine is a precursor in the biosynthesis of pyrrolizidine alkaloids. This chain is Homospermidine synthase 1 (HSS1), found in Senecio vernalis (Spring groundsel).